Here is an 80-residue protein sequence, read N- to C-terminus: uncharacterized protein (80 aa).

It to M.leprae U650M.

This is an uncharacterized protein from Mycobacterium bovis (strain ATCC BAA-935 / AF2122/97).